The primary structure comprises 275 residues: Envelope glycoprotein (275 aa).

Cystine bridges form between C1/C10, C18/C27, and C58/C62. An N-linked (GlcNAc...) asparagine; by host glycan is attached at N122. 4 cysteine pairs are disulfide-bonded: C164-C194, C187-C239, C204-C209, and C240-C245.

The protein belongs to the hantavirus envelope glycoprotein family. As to quaternary structure, homodimer. Homotetramer; forms heterotetrameric Gn-Gc spikes in the pre-fusion conformation. Homotrimer; forms homotrimer in the post-fusion conformation at acidic pH. Interacts (via C-terminus) with the nucleoprotein. Post-translationally, envelope polyprotein precursor is quickly cleaved in vivo just after synthesis, presumably by host signal peptidase.

Its subcellular location is the virion membrane. It localises to the host cell surface. The protein localises to the host Golgi apparatus membrane. It is found in the host endoplasmic reticulum membrane. Forms homotetramers with glycoprotein N at the surface of the virion. Attaches the virion to host cell receptors including integrin ITGAV/ITGB3. This attachment induces virion internalization predominantly through clathrin-dependent endocytosis. Class II fusion protein that promotes fusion of viral membrane with host endosomal membrane after endocytosis of the virion. The protein is Envelope glycoprotein (GP) of Homo sapiens (Human).